We begin with the raw amino-acid sequence, 151 residues long: MRCPKCQHNGTRVLDSRPSDESRSIKRRRECEKCLQRFTTYETVEERPLLIIKKDGMREEFSSDKMLRGLVRACEKRPVPLETLEKMVLDVERTLRNEGKQEVRSQDVGELVMERLAKIDDVAYVRFASVYRQFKDINVFIKELTELMNKN.

The tract at residues 1 to 24 is disordered; it reads MRCPKCQHNGTRVLDSRPSDESRS. Residues 3 to 34 fold into a zinc finger; it reads CPKCQHNGTRVLDSRPSDESRSIKRRRECEKC. Basic and acidic residues predominate over residues 14–24; the sequence is LDSRPSDESRS. The 91-residue stretch at 49–139 folds into the ATP-cone domain; sequence LLIIKKDGMR…VYRQFKDINV (91 aa).

This sequence belongs to the NrdR family. Requires Zn(2+) as cofactor.

Functionally, negatively regulates transcription of bacterial ribonucleotide reductase nrd genes and operons by binding to NrdR-boxes. This is Transcriptional repressor NrdR from Shouchella clausii (strain KSM-K16) (Alkalihalobacillus clausii).